Consider the following 21-residue polypeptide: Venom peptide Ocy4 (21 aa).

As to expression, expressed by the venom gland.

The protein localises to the secreted. The chain is Venom peptide Ocy4 from Opisthacanthus cayaporum (South American scorpion).